A 24-amino-acid polypeptide reads, in one-letter code: Bombinin (24 aa).

Residue asparagine 24 is modified to Asparagine amide.

It belongs to the bombinin family. Expressed by the skin glands.

The protein localises to the secreted. Has antimicrobial and hemolytic activities. The protein is Bombinin of Bombina variegata (Yellow-bellied toad).